Consider the following 638-residue polypeptide: Chaperone protein HtpG (638 aa).

Residues 1 to 328 (MGDVEELKFS…SSDLPLNISR (328 aa)) form an a; substrate-binding region. The segment at 329 to 558 (ETLQNNMVIE…EHALDIRMER (230 aa)) is b. Positions 484-508 (LEKFTEGDDQQSTKKKKEKKDTDDA) are disordered. The tract at residues 559–638 (FLREQKQLSY…NQVLARLFKK (80 aa)) is c.

It belongs to the heat shock protein 90 family. Homodimer.

It localises to the cytoplasm. Functionally, molecular chaperone. Has ATPase activity. The polypeptide is Chaperone protein HtpG (Anaplasma marginale (strain St. Maries)).